We begin with the raw amino-acid sequence, 230 residues long: Ureidoacrylate amidohydrolase RutB (230 aa).

Residue Asp-24 is the Proton acceptor of the active site. Residue Lys-133 is part of the active site. The active-site Nucleophile is Cys-166.

The protein belongs to the isochorismatase family. RutB subfamily.

The catalysed reaction is (Z)-3-ureidoacrylate + H2O + H(+) = (Z)-3-aminoacrylate + NH4(+) + CO2. It catalyses the reaction (Z)-3-ureidoacrylate + H2O = (Z)-3-aminoacrylate + carbamate + H(+). The enzyme catalyses (Z)-2-methylureidoacrylate + H2O + H(+) = (Z)-2-methylaminoacrylate + NH4(+) + CO2. Its function is as follows. Hydrolyzes ureidoacrylate to form aminoacrylate and carbamate. The carbamate hydrolyzes spontaneously, thereby releasing one of the nitrogen atoms of the pyrimidine ring as ammonia and one of its carbon atoms as CO2. This Escherichia coli O7:K1 (strain IAI39 / ExPEC) protein is Ureidoacrylate amidohydrolase RutB.